A 157-amino-acid chain; its full sequence is Protein-export protein SecB (157 aa).

Belongs to the SecB family. Homotetramer, a dimer of dimers. One homotetramer interacts with 1 SecA dimer.

The protein localises to the cytoplasm. Its function is as follows. One of the proteins required for the normal export of preproteins out of the cell cytoplasm. It is a molecular chaperone that binds to a subset of precursor proteins, maintaining them in a translocation-competent state. It also specifically binds to its receptor SecA. The sequence is that of Protein-export protein SecB from Magnetococcus marinus (strain ATCC BAA-1437 / JCM 17883 / MC-1).